The chain runs to 360 residues: Alpha-2-HS-glycoprotein (360 aa).

Residues 1–15 (LVLLLSLAQLWSCHL) form the signal peptide. Residues 24–130 (YREHNCDDPE…QFTVLSAKCD (107 aa)) form the Cystatin fetuin-A-type 1 domain. Disulfide bonds link Cys29–Cys351, Cys86–Cys97, Cys111–Cys129, Cys143–Cys146, Cys205–Cys216, and Cys227–Cys244. N-linked (GlcNAc...) asparagine glycosylation is present at Asn96. Ser131 is modified (phosphoserine). Thr132 carries the phosphothreonine modification. At Ser135 the chain carries Phosphoserine. The Cystatin fetuin-A-type 2 domain occupies 141 to 252 (KLCPDCPLLT…TCTIFPAQPV (112 aa)). A glycan (N-linked (GlcNAc...) asparagine) is linked at Asn153. A disordered region spans residues 260 to 285 (VAGAAAVEPAPAVDPASPVSPPDGQS). Phosphothreonine is present on Thr312. 3 positions are modified to phosphoserine: Ser318, Ser321, and Ser323.

This sequence belongs to the fetuin family. In terms of processing, phosphorylated by FAM20C in the extracellular medium. Bone marrow.

It localises to the secreted. A cell adhesion protein that binds immature cells of the granulocyte lineage. This is Alpha-2-HS-glycoprotein (AHSG) from Oryctolagus cuniculus (Rabbit).